A 245-amino-acid polypeptide reads, in one-letter code: Probable transcriptional regulatory protein TP_0474 (245 aa).

The protein belongs to the TACO1 family.

The protein localises to the cytoplasm. This chain is Probable transcriptional regulatory protein TP_0474, found in Treponema pallidum (strain Nichols).